The chain runs to 477 residues: ATP synthase subunit beta (477 aa).

ATP is bound at residue 148–155 (GGAGVGKT).

This sequence belongs to the ATPase alpha/beta chains family. In terms of assembly, F-type ATPases have 2 components, CF(1) - the catalytic core - and CF(0) - the membrane proton channel. CF(1) has five subunits: alpha(3), beta(3), gamma(1), delta(1), epsilon(1). CF(0) has three main subunits: a(1), b(2) and c(9-12). The alpha and beta chains form an alternating ring which encloses part of the gamma chain. CF(1) is attached to CF(0) by a central stalk formed by the gamma and epsilon chains, while a peripheral stalk is formed by the delta and b chains.

The protein localises to the cell inner membrane. It catalyses the reaction ATP + H2O + 4 H(+)(in) = ADP + phosphate + 5 H(+)(out). Its function is as follows. Produces ATP from ADP in the presence of a proton gradient across the membrane. The catalytic sites are hosted primarily by the beta subunits. This Psychrobacter arcticus (strain DSM 17307 / VKM B-2377 / 273-4) protein is ATP synthase subunit beta.